The chain runs to 357 residues: Neutral protease 2 homolog BDCG_00922 (357 aa).

Residues 1–19 (MRSPQSILAIVAFATTAIA) form the signal peptide. Positions 20–182 (GVVPSTEKRA…FASLNQFSKR (163 aa)) are excised as a propeptide. 3 cysteine pairs are disulfide-bonded: C188/C259, C266/C284, and C297/C357. H308 is a Zn(2+) binding site. Residue E309 is part of the active site. The Zn(2+) site is built by H312 and D323.

This sequence belongs to the peptidase M35 family. Zn(2+) serves as cofactor.

The protein localises to the secreted. It carries out the reaction Preferential cleavage of bonds with hydrophobic residues in P1'. Also 3-Asn-|-Gln-4 and 8-Gly-|-Ser-9 bonds in insulin B chain.. Its function is as follows. Secreted metalloproteinase that allows assimilation of proteinaceous substrates. Shows high activities on basic nuclear substrates such as histone and protamine. The sequence is that of Neutral protease 2 homolog BDCG_00922 from Ajellomyces dermatitidis (strain ER-3 / ATCC MYA-2586) (Blastomyces dermatitidis).